The primary structure comprises 88 residues: Elongation factor 1-beta (88 aa).

This sequence belongs to the EF-1-beta/EF-1-delta family.

Functionally, promotes the exchange of GDP for GTP in EF-1-alpha/GDP, thus allowing the regeneration of EF-1-alpha/GTP that could then be used to form the ternary complex EF-1-alpha/GTP/AAtRNA. The sequence is that of Elongation factor 1-beta from Halobacterium salinarum (strain ATCC 29341 / DSM 671 / R1).